A 366-amino-acid polypeptide reads, in one-letter code: 5-hydroxytryptamine receptor 1F (366 aa).

Over 1 to 24 (MDFLNSSDQNLTSEELLHRMPSKI) the chain is Extracellular. N-linked (GlcNAc...) asparagine glycosylation is found at N5 and N10. A helical transmembrane segment spans residues 25–49 (LVSLTLSGLALMTTTINSLVIAAII). The Cytoplasmic segment spans residues 50–59 (VTRKLHHPAN). The helical transmembrane segment at 60–81 (YLICSLAVTDFLVAVLVMPFSI) threads the bilayer. Residues 82–96 (VYIVRESWIMGQVLC) lie on the Extracellular side of the membrane. An intrachain disulfide couples C96 to C172. The helical transmembrane segment at 97-119 (DIWLSVDIICCTCSILHLSAIAL) threads the bilayer. Residues D103 and C107 each contribute to the serotonin site. The short motif at 120 to 122 (DRY) is the DRY motif; important for ligand-induced conformation changes element. The Cytoplasmic segment spans residues 120–139 (DRYRAITDAVEYARKRTPKQ). The helical transmembrane segment at 140–159 (AGIMITIVWIISVFISMPPL) threads the bilayer. Residues 160 to 178 (FWRHQGTSRDDECIIKHDH) lie on the Extracellular side of the membrane. Residues 179 to 202 (IVSTIYSTFGAFYIPLVLILILYY) form a helical membrane-spanning segment. Residues 203–291 (KIYKAAKTLY…KISGTRERKA (89 aa)) are Cytoplasmic-facing. A helical transmembrane segment spans residues 292-315 (ATTLGLILGAFVICWLPFFVKELV). At 316 to 327 (VNVCEKCKISEE) the chain is on the extracellular side. The chain crosses the membrane as a helical span at residues 328–350 (MANFLAWLGYLNSLINPLIYTIF). The NPxxY motif; important for ligand-induced conformation changes and signaling signature appears at 343 to 347 (NPLIY). At 351–366 (NEDFKKAFQKLVRCQY) the chain is on the cytoplasmic side.

The protein belongs to the G-protein coupled receptor 1 family.

The protein resides in the cell membrane. Its function is as follows. G-protein coupled receptor for 5-hydroxytryptamine (serotonin). Also functions as a receptor for various alkaloids and psychoactive substances. Ligand binding causes a conformation change that triggers signaling via guanine nucleotide-binding proteins (G proteins) and modulates the activity of downstream effectors, such as adenylate cyclase. HTR1F is coupled to G(i)/G(o) G alpha proteins and mediates inhibitory neurotransmission by inhibiting adenylate cyclase activity. This Cavia porcellus (Guinea pig) protein is 5-hydroxytryptamine receptor 1F (HTR1F).